We begin with the raw amino-acid sequence, 418 residues long: S-adenosylmethionine synthase (418 aa).

ATP is bound at residue His16. Residue Asp18 coordinates Mg(2+). A K(+)-binding site is contributed by Glu44. L-methionine contacts are provided by Glu57 and Gln100. The interval 100–110 is flexible loop; sequence QSPDIAQGVDS. ATP is bound by residues 174-176, Asp259, 265-266, Ala282, and Lys286; these read DGK and RK. Asp259 is a binding site for L-methionine. L-methionine is bound at residue Lys290.

This sequence belongs to the AdoMet synthase family. Homotetramer; dimer of dimers. It depends on Mg(2+) as a cofactor. Requires K(+) as cofactor.

The protein localises to the cytoplasm. It catalyses the reaction L-methionine + ATP + H2O = S-adenosyl-L-methionine + phosphate + diphosphate. The protein operates within amino-acid biosynthesis; S-adenosyl-L-methionine biosynthesis; S-adenosyl-L-methionine from L-methionine: step 1/1. Its function is as follows. Catalyzes the formation of S-adenosylmethionine (AdoMet) from methionine and ATP. The overall synthetic reaction is composed of two sequential steps, AdoMet formation and the subsequent tripolyphosphate hydrolysis which occurs prior to release of AdoMet from the enzyme. This chain is S-adenosylmethionine synthase, found in Acaryochloris marina (strain MBIC 11017).